The chain runs to 510 residues: Arginine biosynthesis bifunctional protein ArgJ, chloroplastic (510 aa).

Residues threonine 223, lysine 249, glutamate 359, asparagine 505, and threonine 510 each coordinate substrate.

Belongs to the ArgJ family. Heterodimer of an alpha and a beta chain.

It localises to the plastid. Its subcellular location is the chloroplast. It carries out the reaction N(2)-acetyl-L-ornithine + L-glutamate = N-acetyl-L-glutamate + L-ornithine. The enzyme catalyses L-glutamate + acetyl-CoA = N-acetyl-L-glutamate + CoA + H(+). It participates in amino-acid biosynthesis; L-arginine biosynthesis; L-ornithine and N-acetyl-L-glutamate from L-glutamate and N(2)-acetyl-L-ornithine (cyclic): step 1/1. The protein operates within amino-acid biosynthesis; L-arginine biosynthesis; N(2)-acetyl-L-ornithine from L-glutamate: step 1/4. In terms of biological role, catalyzes two activities which are involved in the cyclic version of arginine biosynthesis: the synthesis of acetylglutamate from glutamate and acetyl-CoA, and of ornithine by transacetylation between acetylornithine and glutamate. In Vitis vinifera (Grape), this protein is Arginine biosynthesis bifunctional protein ArgJ, chloroplastic.